Reading from the N-terminus, the 202-residue chain is Na(+)-translocating NADH-quinone reductase subunit E (202 aa).

6 consecutive transmembrane segments (helical) span residues 5 to 25 (VSLFITSVFIENMALAYFLGM), 35 to 55 (VSTAIGLGVAVVVVMAITVPL), 81 to 101 (FLGLLSYIGLIAATVQILEMF), 114 to 134 (GVFLPLITVNCAILGGVLFMV), 144 to 164 (VVYGVGAGFGWALAITALAGI), and 180 to 200 (LGITFITVGLMSLGFMSFGGM).

The protein belongs to the NqrDE/RnfAE family. Composed of six subunits; NqrA, NqrB, NqrC, NqrD, NqrE and NqrF.

Its subcellular location is the cell inner membrane. The enzyme catalyses a ubiquinone + n Na(+)(in) + NADH + H(+) = a ubiquinol + n Na(+)(out) + NAD(+). In terms of biological role, NQR complex catalyzes the reduction of ubiquinone-1 to ubiquinol by two successive reactions, coupled with the transport of Na(+) ions from the cytoplasm to the periplasm. NqrA to NqrE are probably involved in the second step, the conversion of ubisemiquinone to ubiquinol. The sequence is that of Na(+)-translocating NADH-quinone reductase subunit E from Psychrobacter arcticus (strain DSM 17307 / VKM B-2377 / 273-4).